We begin with the raw amino-acid sequence, 899 residues long: Protein translocase subunit SecA (899 aa).

ATP is bound by residues Gln87, 105–109, and Asp512; that span reads GEGKT. The segment at 846–899 is disordered; the sequence is MEEEQQQQAQKKIVFNLGEEPATAPQPARSKKSASRNDPCPCGSGKKYKKCCGK. 4 residues coordinate Zn(2+): Cys885, Cys887, Cys896, and Cys897.

The protein belongs to the SecA family. In terms of assembly, monomer and homodimer. Part of the essential Sec protein translocation apparatus which comprises SecA, SecYEG and auxiliary proteins SecDF-YajC and YidC. It depends on Zn(2+) as a cofactor.

It is found in the cell inner membrane. The protein resides in the cytoplasm. The catalysed reaction is ATP + H2O + cellular proteinSide 1 = ADP + phosphate + cellular proteinSide 2.. In terms of biological role, part of the Sec protein translocase complex. Interacts with the SecYEG preprotein conducting channel. Has a central role in coupling the hydrolysis of ATP to the transfer of proteins into and across the cell membrane, serving as an ATP-driven molecular motor driving the stepwise translocation of polypeptide chains across the membrane. This is Protein translocase subunit SecA from Geobacter metallireducens (strain ATCC 53774 / DSM 7210 / GS-15).